Here is a 983-residue protein sequence, read N- to C-terminus: Bifunctional glutamine synthetase adenylyltransferase/adenylyl-removing enzyme (983 aa).

Residues 1-490 (MDRKSSVTID…AHGQVFYSPV (490 aa)) are adenylyl removase. The adenylyl transferase stretch occupies residues 496-983 (RIPTQDLRMS…RVVDAVFWNQ (488 aa)).

This sequence belongs to the GlnE family. It depends on Mg(2+) as a cofactor.

It carries out the reaction [glutamine synthetase]-O(4)-(5'-adenylyl)-L-tyrosine + phosphate = [glutamine synthetase]-L-tyrosine + ADP. It catalyses the reaction [glutamine synthetase]-L-tyrosine + ATP = [glutamine synthetase]-O(4)-(5'-adenylyl)-L-tyrosine + diphosphate. Involved in the regulation of glutamine synthetase GlnA, a key enzyme in the process to assimilate ammonia. When cellular nitrogen levels are high, the C-terminal adenylyl transferase (AT) inactivates GlnA by covalent transfer of an adenylyl group from ATP to specific tyrosine residue of GlnA, thus reducing its activity. Conversely, when nitrogen levels are low, the N-terminal adenylyl removase (AR) activates GlnA by removing the adenylyl group by phosphorolysis, increasing its activity. The regulatory region of GlnE binds the signal transduction protein PII (GlnB) which indicates the nitrogen status of the cell. The polypeptide is Bifunctional glutamine synthetase adenylyltransferase/adenylyl-removing enzyme (Cutibacterium acnes (strain DSM 16379 / KPA171202) (Propionibacterium acnes)).